Here is a 1369-residue protein sequence, read N- to C-terminus: Rho guanine nucleotide exchange factor 10 (1369 aa).

Residues 1–106 are disordered; the sequence is MRPPGFLSRA…ETTPVAEPTK (106 aa). Residues 46-64 show a composition bias toward acidic residues; sequence NNEEEEGEQFDFDSGDEIP. Residues 83-100 are compositionally biased toward low complexity; sequence EAPAPTGGEDGAGAETTP. Ser-180 carries the phosphoserine modification. Positions 184–254 are disordered; sequence EAETPEVTED…ENSDSEPDEM (71 aa). A compositionally biased stretch (polar residues) spans 196-209; the sequence is PNSLSSEEPPTSED. The stretch at 304–355 forms a coiled coil; sequence KKQLSHDLTRLKEHYEKKMRDLMASTVGVVEIQQLRQKHELKMQKLVKAAKD. Ser-379 is subject to Phosphoserine. Residues 421–608 form the DH domain; the sequence is VRRYILGSVV…ETLAEKLNER (188 aa). Disordered regions lie at residues 1226–1260 and 1277–1297; these read KDKS…LSQG and QKSD…SSSL. The span at 1279–1296 shows a compositional bias: low complexity; the sequence is SDLSSSSGSLSLSHGSSS. Ser-1287 is modified (phosphoserine). Position 1338 is an N5-methylglutamine (Gln-1338).

Methylated at Gln-1338 by N6AMT1.

Functionally, may play a role in developmental myelination of peripheral nerves. This chain is Rho guanine nucleotide exchange factor 10 (ARHGEF10), found in Homo sapiens (Human).